A 1100-amino-acid polypeptide reads, in one-letter code: DNA-directed RNA polymerase subunit beta (1100 aa).

The disordered stretch occupies residues 1064–1100; that stretch reads YEEDKEVDLMADVNQRRTPSRPTYESMSVGDIDDDDD. Over residues 1079–1089 the composition is skewed to polar residues; that stretch reads RRTPSRPTYES.

Belongs to the RNA polymerase beta chain family. In cyanobacteria the RNAP catalytic core is composed of 2 alpha, 1 beta, 1 beta', 1 gamma and 1 omega subunit. When a sigma factor is associated with the core the holoenzyme is formed, which can initiate transcription.

The enzyme catalyses RNA(n) + a ribonucleoside 5'-triphosphate = RNA(n+1) + diphosphate. Functionally, DNA-dependent RNA polymerase catalyzes the transcription of DNA into RNA using the four ribonucleoside triphosphates as substrates. This is DNA-directed RNA polymerase subunit beta from Synechococcus elongatus (strain ATCC 33912 / PCC 7942 / FACHB-805) (Anacystis nidulans R2).